A 207-amino-acid chain; its full sequence is UPF0319 protein VV1_2115 (207 aa).

A signal peptide spans 1-18 (MLRVLGLAGMLMSFNIHA).

This sequence belongs to the UPF0319 family.

The protein is UPF0319 protein VV1_2115 of Vibrio vulnificus (strain CMCP6).